The chain runs to 218 residues: MICIPVIDENVCDAINSAKEALKYGDIVEFRVDLLKDVTFEDIEEFSKVPSIITIRAEWEGGNWKKSDNERIELLKHAIKNNAKFVDIELKEERNLELVKYRNESNSNTKIIISYHDFEKTPEIDELIEVVEKELKIGDIAKFATFAHSKEDTLKILNLMNKYAGKIIAIGMGESGKLTRILGLDFGSILTFASMEGKASAPGQVDVKKLKEILKLIG.

3-dehydroquinate-binding positions include 29–31 and R56; that span reads EFR. Residue H116 is the Proton donor/acceptor of the active site. The Schiff-base intermediate with substrate role is filled by K142. 3-dehydroquinate-binding residues include R180, S200, and Q204.

It belongs to the type-I 3-dehydroquinase family. As to quaternary structure, homodimer.

The enzyme catalyses 3-dehydroquinate = 3-dehydroshikimate + H2O. Its pathway is metabolic intermediate biosynthesis; chorismate biosynthesis; chorismate from D-erythrose 4-phosphate and phosphoenolpyruvate: step 3/7. Functionally, involved in the third step of the chorismate pathway, which leads to the biosynthesis of aromatic amino acids. Catalyzes the cis-dehydration of 3-dehydroquinate (DHQ) and introduces the first double bond of the aromatic ring to yield 3-dehydroshikimate. In Methanococcus maripaludis (strain C7 / ATCC BAA-1331), this protein is 3-dehydroquinate dehydratase.